The primary structure comprises 492 residues: Probable ATP-citrate synthase subunit 2 (492 aa).

Residue Ser-24 is modified to Phosphoserine.

It in the N-terminal section; belongs to the succinate/malate CoA ligase beta subunit family. This sequence in the C-terminal section; belongs to the succinate/malate CoA ligase alpha subunit family. As to quaternary structure, composed of two subunits.

It localises to the cytoplasm. It is found in the nucleus. It catalyses the reaction oxaloacetate + acetyl-CoA + ADP + phosphate = citrate + ATP + CoA. In terms of biological role, ATP citrate-lyase is the primary enzyme responsible for the synthesis of cytosolic acetyl-CoA. Has a central role in de novo lipid synthesis. In Schizosaccharomyces pombe (strain 972 / ATCC 24843) (Fission yeast), this protein is Probable ATP-citrate synthase subunit 2.